We begin with the raw amino-acid sequence, 3795 residues long: NBPF family member NBPF10 (3795 aa).

The stretch at 75-119 (RQFKEEKLAEQLKQAEELRQYKVLVHSQERELTQLREKLREGRDA) forms a coiled coil. The tract at residues 161-200 (KLSPENDEDEDEDVQVEEAEKVLESSAPREVQKAEESKVP) is disordered. Acidic residues predominate over residues 165–177 (ENDEDEDEDVQVE). Positions 165–259 (ENDEDEDEDV…ECQDALNILP (95 aa)) constitute an Olduvai 1 domain. The span at 190–200 (EVQKAEESKVP) shows a compositional bias: basic and acidic residues. Residues 346 to 390 (RQFKEEKLAEQLKQAEELRQYKVLVHAQERELTQLKEKLREGRDA) adopt a coiled-coil conformation. Olduvai domains follow at residues 436–528 (ENDN…HIIP), 529–600 (ENES…VDIG), 601–692 (RHRW…PSCP), 695–750 (SREL…LDVD), 751–843 (RIKK…RSKK), 844–936 (ERRR…PSCP), 939–994 (SREL…LDVD), 995–1087 (RIKK…RSKK), 1088–1180 (ERRR…PSCP), 1183–1238 (SREL…LDVD), 1239–1331 (RIKK…RSKK), 1332–1424 (ERRR…PSCP), 1427–1482 (SREL…LDVD), 1483–1575 (RIKK…RSKK), 1576–1668 (ERRR…PSCP), 1671–1726 (SREL…LDVD), 1727–1819 (RIKK…RSKK), 1820–1912 (ERRR…PSCP), 1915–1970 (SREL…LDVD), 1971–2063 (RIKK…RSKK), 2064–2156 (ERRR…PSCP), 2159–2214 (SREL…LDVD), 2215–2307 (RIKK…RSKK), 2308–2400 (ERRR…PSCP), 2403–2458 (SREL…LDVD), 2459–2551 (RIKK…RSKK), 2552–2644 (ERRR…PSCP), 2647–2702 (SREL…LDVD), 2703–2795 (RIKK…RSKK), 2796–2888 (ERRR…PSCP), 2891–2946 (SREL…LDVD), 2947–3039 (RIKK…RSKK), 3040–3132 (ERRR…PSCP), 3135–3190 (SREL…LDVD), 3191–3283 (RIKK…RSKK), 3284–3376 (ERRR…PSCP), 3379–3434 (SREL…LDVD), 3435–3527 (RIKK…RSKK), 3528–3620 (ERRR…PSCP), 3623–3696 (SREL…RSKK), and 3697–3795 (ERRR…IFPQ). Disordered regions lie at residues 451 to 475 (EKVQ…EDSL) and 520 to 566 (WEDA…EGYS). Composition is skewed to acidic residues over residues 530–539 (NESDDEEEEE) and 550–562 (ESEE…ESWD). The tract at residues 830-868 (KGKGKKRRGRRSKKERRRGRKEGEEDQNPPCPRLSRELL) is disordered. Basic residues predominate over residues 831–849 (GKGKKRRGRRSKKERRRGR). Residues 1073 to 1109 (KKGKGKKRRGRRSKKERRRGRKEGEEDQNPPCPRLSR) form a disordered region. Basic residues predominate over residues 1075-1093 (GKGKKRRGRRSKKERRRGR). Disordered stretches follow at residues 1242 to 1261 (KDEE…SREL) and 1318 to 1353 (KGKG…RLSR). Over residues 1319-1337 (GKGKKRRGRRSKKERRRGR) the composition is skewed to basic residues. The interval 1562–1600 (KGKGKKRRGRRSKKERRRGRKEGEEDQNPPCPRLSRELL) is disordered. A compositionally biased stretch (basic residues) spans 1563-1581 (GKGKKRRGRRSKKERRRGR). A disordered region spans residues 1806 to 1844 (KGKGKKRRGRRSKKERRRGRKEGEEDQNPPCPRLSRELL). Residues 1807 to 1825 (GKGKKRRGRRSKKERRRGR) are compositionally biased toward basic residues. The interval 2050 to 2088 (KGKGKKRRGRRSKKERRRGRKEGEEDQNPPCPRLSRELL) is disordered. The span at 2051–2069 (GKGKKRRGRRSKKERRRGR) shows a compositional bias: basic residues. The tract at residues 2294-2332 (KGKGKKRRGRRSKKERRRGRKEGEEDQNPPCPRLSRELL) is disordered. Over residues 2295–2313 (GKGKKRRGRRSKKERRRGR) the composition is skewed to basic residues. Residues 2538–2576 (KGKGKKRRGRRSKKERRRGRKEGEEDQNPPCPRLSRELL) form a disordered region. Basic residues predominate over residues 2539-2557 (GKGKKRRGRRSKKERRRGR). Residues 2782–2820 (KGKGKKRRGRRSKKERRRGRKEGEEDQNPPCPRLSRELL) are disordered. Over residues 2783–2801 (GKGKKRRGRRSKKERRRGR) the composition is skewed to basic residues. The tract at residues 3026–3064 (KGKGKKRRGRRSKKERRRGRKEGEEDQNPPCPRLSRELL) is disordered. A compositionally biased stretch (basic residues) spans 3027–3045 (GKGKKRRGRRSKKERRRGR). Disordered stretches follow at residues 3194–3213 (KDEE…SREL) and 3270–3308 (KGKG…RELL). Basic residues predominate over residues 3271 to 3289 (GKGKKRRGRRSKKERRRGR). 2 disordered regions span residues 3514–3552 (KGKG…RELL) and 3684–3716 (GKGK…CPRL). Composition is skewed to basic residues over residues 3515–3533 (GKGK…RRGR) and 3684–3702 (GKGK…RRGR).

It belongs to the NBPF family.

It is found in the cytoplasm. This is NBPF family member NBPF10 from Homo sapiens (Human).